Consider the following 1059-residue polypeptide: RNA-binding protein 26 (1059 aa).

Composition is skewed to basic and acidic residues over residues glutamate 98–lysine 114 and arginine 130–serine 147. The interval glutamate 98–serine 275 is disordered. A compositionally biased stretch (polar residues) spans leucine 172 to asparagine 182. Positions arginine 184–arginine 213 are enriched in basic and acidic residues. Over residues tyrosine 214–serine 231 the composition is skewed to basic residues. Residues tryptophan 232–proline 266 are compositionally biased toward basic and acidic residues. A C3H1-type zinc finger spans residues glutamine 327 to aspartate 355. A compositionally biased stretch (pro residues) spans proline 375–glutamine 428. The tract at residues proline 375–valine 443 is disordered. The segment covering alanine 434 to valine 443 has biased composition (low complexity). The RRM 1 domain occupies threonine 581 to glutamate 655. Positions glycine 771 to asparagine 873 form a coiled coil. Residues arginine 942–proline 1011 form the RRM 2 domain. The interval lysine 1010–arginine 1059 is disordered. Acidic residues-rich tracts occupy residues glutamate 1019 to histidine 1031 and leucine 1040 to asparagine 1052.

May be involved in the turnover of nuclear polyadenylated (pA+) RNA. The polypeptide is RNA-binding protein 26 (Xenopus laevis (African clawed frog)).